Here is a 366-residue protein sequence, read N- to C-terminus: Phospho-N-acetylmuramoyl-pentapeptide-transferase (366 aa).

Transmembrane regions (helical) follow at residues 27 to 47, 71 to 91, 93 to 113, 134 to 154, 174 to 194, 205 to 225, 245 to 265, 268 to 288, 294 to 314, and 343 to 363; these read AALF…INSL, TPTM…LLWA, LSNV…AIGF, LGIE…TALA, FMIN…VGAG, GLAI…AYLA, LAVV…FNAP, AIFM…TVAV, IVMA…IIQV, and QVVI…LSTL.

This sequence belongs to the glycosyltransferase 4 family. MraY subfamily. Requires Mg(2+) as cofactor.

Its subcellular location is the cell inner membrane. It catalyses the reaction UDP-N-acetyl-alpha-D-muramoyl-L-alanyl-gamma-D-glutamyl-meso-2,6-diaminopimeloyl-D-alanyl-D-alanine + di-trans,octa-cis-undecaprenyl phosphate = di-trans,octa-cis-undecaprenyl diphospho-N-acetyl-alpha-D-muramoyl-L-alanyl-D-glutamyl-meso-2,6-diaminopimeloyl-D-alanyl-D-alanine + UMP. Its pathway is cell wall biogenesis; peptidoglycan biosynthesis. Catalyzes the initial step of the lipid cycle reactions in the biosynthesis of the cell wall peptidoglycan: transfers peptidoglycan precursor phospho-MurNAc-pentapeptide from UDP-MurNAc-pentapeptide onto the lipid carrier undecaprenyl phosphate, yielding undecaprenyl-pyrophosphoryl-MurNAc-pentapeptide, known as lipid I. The chain is Phospho-N-acetylmuramoyl-pentapeptide-transferase from Rhizobium leguminosarum bv. trifolii (strain WSM2304).